Consider the following 84-residue polypeptide: MNEKKNLLNGYIVSNKMNKSAVVIVERKIKHSIYKKFIKKRTKLCIHDEKNICNIGDIVTIRECRPISKTKSWILVNILEKSIV.

It belongs to the universal ribosomal protein uS17 family. In terms of assembly, part of the 30S ribosomal subunit.

One of the primary rRNA binding proteins, it binds specifically to the 5'-end of 16S ribosomal RNA. The sequence is that of Small ribosomal subunit protein uS17 from Buchnera aphidicola subsp. Cinara cedri (strain Cc).